We begin with the raw amino-acid sequence, 162 residues long: Probable E3 ubiquitin-protein ligase XERICO (162 aa).

A helical membrane pass occupies residues 12–28 (GMLCVILVNTALSISIV). Residues 103-145 (CSVCLSKFQGDSEINKLKCGHLFHKTCLEKWIDYWNITCPLCR) form an RING-type; atypical zinc finger.

As to quaternary structure, interacts with UBC8 and TULP9. In terms of tissue distribution, ubiquitous. Higher expression in actively growing tissues.

It localises to the membrane. The enzyme catalyses S-ubiquitinyl-[E2 ubiquitin-conjugating enzyme]-L-cysteine + [acceptor protein]-L-lysine = [E2 ubiquitin-conjugating enzyme]-L-cysteine + N(6)-ubiquitinyl-[acceptor protein]-L-lysine.. It participates in protein modification; protein ubiquitination. Functionally, function on abscisic acid homeostasis at post-translational level, probably through ubiquitin/proteasome-dependent substrate-specific degradation. The sequence is that of Probable E3 ubiquitin-protein ligase XERICO (XERICO) from Arabidopsis thaliana (Mouse-ear cress).